Reading from the N-terminus, the 200-residue chain is Isochorismatase family protein 2A (200 aa).

This sequence belongs to the isochorismatase family.

The sequence is that of Isochorismatase family protein 2A from Dictyostelium discoideum (Social amoeba).